Reading from the N-terminus, the 233-residue chain is Sugar fermentation stimulation protein homolog (233 aa).

This sequence belongs to the SfsA family.

The protein is Sugar fermentation stimulation protein homolog of Saccharophagus degradans (strain 2-40 / ATCC 43961 / DSM 17024).